Reading from the N-terminus, the 355-residue chain is Homoserine O-succinyltransferase (355 aa).

Cysteine 146 acts as the Acyl-thioester intermediate in catalysis. Lysine 167 and serine 196 together coordinate substrate. Histidine 239 (proton acceptor) is an active-site residue. Residue glutamate 241 is part of the active site. Arginine 253 contributes to the substrate binding site.

It belongs to the MetA family.

The protein localises to the cytoplasm. It catalyses the reaction L-homoserine + succinyl-CoA = O-succinyl-L-homoserine + CoA. Its pathway is amino-acid biosynthesis; L-methionine biosynthesis via de novo pathway; O-succinyl-L-homoserine from L-homoserine: step 1/1. Functionally, transfers a succinyl group from succinyl-CoA to L-homoserine, forming succinyl-L-homoserine. This chain is Homoserine O-succinyltransferase, found in Methylococcus capsulatus (strain ATCC 33009 / NCIMB 11132 / Bath).